A 483-amino-acid chain; its full sequence is Serine protease HTRA4 (483 aa).

The first 30 residues, 1–30, serve as a signal peptide directing secretion; sequence MSFQRLWAVRTQFLLLWLLLPAVPVPWAEA. The 79-residue stretch at 35–113 folds into the IGFBP N-terminal domain; sequence VSLPCPDACD…GAWLGTCGCA (79 aa). 6 cysteine pairs are disulfide-bonded: cysteine 39-cysteine 65, cysteine 43-cysteine 67, cysteine 48-cysteine 68, cysteine 54-cysteine 71, cysteine 79-cysteine 93, and cysteine 87-cysteine 110. A serine protease region spans residues 208 to 368; it reads GSGFIVSEDG…IPSDRIRQFL (161 aa). Residues histidine 224, aspartate 254, and serine 332 each act as charge relay system in the active site. The PDZ domain occupies 379–471; that stretch reads KAPLQKKYLG…LSIIVLRGSQ (93 aa).

This sequence belongs to the peptidase S1C family.

The protein localises to the secreted. Functionally, serine protease. The protein is Serine protease HTRA4 (Htra4) of Mus musculus (Mouse).